The primary structure comprises 156 residues: Large ribosomal subunit protein uL15 (156 aa).

The tract at residues 1-48 (MKLHDLKPTPGSRKDRKRVGRGPGGTDKTAGRGHKGQKSRSGAGKGAF) is disordered.

Belongs to the universal ribosomal protein uL15 family. As to quaternary structure, part of the 50S ribosomal subunit. Contacts proteins L4, L21 and L35.

Its function is as follows. Binds to the 23S rRNA. The sequence is that of Large ribosomal subunit protein uL15 (rplO) from Deinococcus radiodurans (strain ATCC 13939 / DSM 20539 / JCM 16871 / CCUG 27074 / LMG 4051 / NBRC 15346 / NCIMB 9279 / VKM B-1422 / R1).